Reading from the N-terminus, the 1390-residue chain is DNA-directed RNA polymerase subunit beta'' (1390 aa).

Positions 224, 295, 302, and 305 each coordinate Zn(2+).

It belongs to the RNA polymerase beta' chain family. RpoC2 subfamily. In plastids the minimal PEP RNA polymerase catalytic core is composed of four subunits: alpha, beta, beta', and beta''. When a (nuclear-encoded) sigma factor is associated with the core the holoenzyme is formed, which can initiate transcription. Zn(2+) is required as a cofactor.

The protein resides in the plastid. It localises to the chloroplast. It carries out the reaction RNA(n) + a ribonucleoside 5'-triphosphate = RNA(n+1) + diphosphate. Its function is as follows. DNA-dependent RNA polymerase catalyzes the transcription of DNA into RNA using the four ribonucleoside triphosphates as substrates. This chain is DNA-directed RNA polymerase subunit beta'', found in Daucus carota (Wild carrot).